The chain runs to 393 residues: S-adenosylmethionine synthase (393 aa).

Position 16 (histidine 16) interacts with ATP. Residue aspartate 18 coordinates Mg(2+). Glutamate 44 is a binding site for K(+). Glutamate 57 and glutamine 100 together coordinate L-methionine. The tract at residues 100–110 (QSPDIVMGVDG) is flexible loop. ATP is bound by residues 165–167 (DAK), 231–232 (RF), aspartate 240, 246–247 (RK), and lysine 267. Aspartate 240 is a binding site for L-methionine. Residue lysine 271 coordinates L-methionine.

Belongs to the AdoMet synthase family. As to quaternary structure, homotetramer; dimer of dimers. It depends on Mg(2+) as a cofactor. The cofactor is K(+).

The protein resides in the cytoplasm. It carries out the reaction L-methionine + ATP + H2O = S-adenosyl-L-methionine + phosphate + diphosphate. The protein operates within amino-acid biosynthesis; S-adenosyl-L-methionine biosynthesis; S-adenosyl-L-methionine from L-methionine: step 1/1. Catalyzes the formation of S-adenosylmethionine (AdoMet) from methionine and ATP. The overall synthetic reaction is composed of two sequential steps, AdoMet formation and the subsequent tripolyphosphate hydrolysis which occurs prior to release of AdoMet from the enzyme. This Coxiella burnetii (strain CbuG_Q212) (Coxiella burnetii (strain Q212)) protein is S-adenosylmethionine synthase.